Here is a 230-residue protein sequence, read N- to C-terminus: Ribose-5-phosphate isomerase A (230 aa).

Substrate is bound by residues 31-34 (TGST), 87-90 (DGAD), and 100-103 (KGGG). Glu-109 functions as the Proton acceptor in the catalytic mechanism. Substrate is bound at residue Lys-127.

The protein belongs to the ribose 5-phosphate isomerase family. As to quaternary structure, homodimer.

The catalysed reaction is aldehydo-D-ribose 5-phosphate = D-ribulose 5-phosphate. It participates in carbohydrate degradation; pentose phosphate pathway; D-ribose 5-phosphate from D-ribulose 5-phosphate (non-oxidative stage): step 1/1. Its function is as follows. Catalyzes the reversible conversion of ribose-5-phosphate to ribulose 5-phosphate. This Lactobacillus delbrueckii subsp. bulgaricus (strain ATCC 11842 / DSM 20081 / BCRC 10696 / JCM 1002 / NBRC 13953 / NCIMB 11778 / NCTC 12712 / WDCM 00102 / Lb 14) protein is Ribose-5-phosphate isomerase A.